The chain runs to 186 residues: Tegument protein UL55 (186 aa).

Belongs to the alphaherpesvirinae HHV-1 UL55 family.

Its subcellular location is the virion tegument. It is found in the host nucleus matrix. The polypeptide is Tegument protein UL55 (Homo sapiens (Human)).